A 350-amino-acid polypeptide reads, in one-letter code: tRNA uridine(34) hydroxylase (350 aa).

The Rhodanese domain maps to 146 to 240 (DDPDAVFIDM…YARRAREQGL (95 aa)). The active-site Cysteine persulfide intermediate is the cysteine 200. Positions 319-328 (RRRRAGRENG) are enriched in basic and acidic residues. Residues 319-350 (RRRRAGRENGNKIFNKSRGRLNSKLSIPDPAE) form a disordered region.

Belongs to the TrhO family.

The catalysed reaction is uridine(34) in tRNA + AH2 + O2 = 5-hydroxyuridine(34) in tRNA + A + H2O. In terms of biological role, catalyzes oxygen-dependent 5-hydroxyuridine (ho5U) modification at position 34 in tRNAs. The polypeptide is tRNA uridine(34) hydroxylase (Salmonella typhi).